Here is a 348-residue protein sequence, read N- to C-terminus: 3'-dehydrocarminate deglycosidase alpha subunit (348 aa).

Glu145 is a Mg(2+) binding site. The active-site Proton acceptor is the His147. Residues Asp177, His275, and Glu311 each coordinate Mg(2+).

Belongs to the C-glycoside deglycosidase alpha subunit family. Heterodimer composed of an alpha subunit (CarB) and a beta subunit (CarC). Mg(2+) serves as cofactor.

The catalysed reaction is 3'-dehydrocarminate + H(+) = kermesate + 1,5-anhydro-D-erythro-hex-1-en-3-ulose. Activity is strongly reduced in the presence of chelating agents. Carbon-carbon bond-cleaving enzyme which participates in a carminate degradation pathway. Cleaves the C-C bond in 3'-dehydrocarminate to form kermesate. Also shows weak activity with other C-glycosides, such as 3''-dehydropuerarin (3''-oxo-puerarin), 3''-dehydroisoorientin (3''-oxo-homoorientin) and 3'-dehydromangiferin (3'-oxo-mangiferin). The chain is 3'-dehydrocarminate deglycosidase alpha subunit from Microbacterium sp.